We begin with the raw amino-acid sequence, 925 residues long: Probable replication restart protein PriA (925 aa).

The Zn(2+) site is built by C645, C648, C654, C657, C672, C675, C685, and C688.

This sequence belongs to the helicase family. PriA subfamily. In terms of assembly, interacts with DnaB (DR_0549). Component of the replication restart primosome. The cofactor is Zn(2+).

Its function is as follows. Initiates the restart of stalled replication forks, which reloads the replicative helicase on sites other than the origin of replication. Recognizes abandoned replication forks and remodels them to uncover a helicase loading site. Promotes assembly of the primosome at these replication forks. Recognizes and binds DNA at stalled replication forks, also binds single-stranded (ss)DNA. This Deinococcus radiodurans (strain ATCC 13939 / DSM 20539 / JCM 16871 / CCUG 27074 / LMG 4051 / NBRC 15346 / NCIMB 9279 / VKM B-1422 / R1) protein is Probable replication restart protein PriA.